Reading from the N-terminus, the 416-residue chain is Neurotensin receptor type 2 (416 aa).

Residues 1–32 (METSSLWPPRPSPSAGLSLEARLGVDTRLWAK) are Extracellular-facing. Residues 33–55 (VLFTALYSLIFALGTAGNALSVH) traverse the membrane as a helical segment. The Cytoplasmic portion of the chain corresponds to 56–64 (VVLKARAGR). A helical membrane pass occupies residues 65–87 (PGRLRYHVLSLALSALLLLLISV). The Extracellular segment spans residues 88-109 (PMELYNFVWSHYPWVFGDLGCR). A disulfide bridge links Cys-108 with Cys-194. A helical membrane pass occupies residues 110-131 (GYYFVRELCAYATVLSVASLSA). The Cytoplasmic portion of the chain corresponds to 132–154 (ERCLAVCQPLRARRLLTPRRTRR). A helical membrane pass occupies residues 155–176 (LLSLVWVASLGLALPMAVIMGQ). At 177–217 (KHEMERADGEPEPASRVCTVLVSRATLQVFIQVNVLVSFVL) the chain is on the extracellular side. The helical transmembrane segment at 218-237 (PLALTAFLNGITVNHLVALY) threads the bilayer. At 238 to 297 (SQVPSASAQVNSIPSRLELLSEEGLLGFITWRKTLSLGVQASLVRHKDASQIRSLQHSAQ) the chain is on the cytoplasmic side. A helical transmembrane segment spans residues 298–318 (VLRAIVAVYVICWLPYHARRL). Topologically, residues 319–337 (MYCYIPDDGWTDELYDFYH) are extracellular. A helical membrane pass occupies residues 338–358 (YFYMVTNTLFYVSSAVTPVLY). Residues 359-416 (NAVSSSFRKLFLESLSSLCGEQRSVVPLPQEAPESTTSTYSFRLWGSPRNPSLGEIQV) are Cytoplasmic-facing. Cys-377 carries the S-palmitoyl cysteine lipid modification. Ser-410 carries the post-translational modification Phosphoserine.

Belongs to the G-protein coupled receptor 1 family. Neurotensin receptor subfamily. NTSR2 sub-subfamily. As to expression, expressed maximally in the cerebellum, hippocampus, piriform cortex and neocortex of adult brain.

The protein localises to the cell membrane. Its function is as follows. Receptor for the tridecapeptide neurotensin. It is associated with G proteins that activate a phosphatidylinositol-calcium second messenger system. The sequence is that of Neurotensin receptor type 2 (Ntsr2) from Mus musculus (Mouse).